The primary structure comprises 721 residues: YTH domain-containing protein 1 (721 aa).

Positions 29-38 (EADIAEELQD) are enriched in acidic residues. The segment at 29–239 (EADIAEELQD…GGGTHSHSQK (211 aa)) is disordered. A compositionally biased stretch (low complexity) spans 48-75 (SESNGGDSSDSEPSISSVSTATSSLAGS). Residues 135–151 (ASDKVKSKSPDTEDRQP) are compositionally biased toward basic and acidic residues. Residues 254–391 (TRFFLIKSNN…KIGGELCRLF (138 aa)) form the YTH domain. RNA contacts are provided by residues 260–262 (KSN), Trp-276, and Trp-327. Disordered stretches follow at residues 424–471 (PPRS…RHHH), 580–605 (DGPGAPPLPDYPPPQRPPPPGFDKAP), and 651–721 (AGGG…DNRR). Residues 432-443 (GHGGGGRGGGRG) are compositionally biased toward gly residues. Basic residues predominate over residues 451-471 (PMRHKRSYHGAPHHRPYRHHH). Residues 583–600 (GAPPLPDYPPPQRPPPPG) show a composition bias toward pro residues. Over residues 651-670 (AGGGMGAGGGSGGGMGGPGG) the composition is skewed to gly residues. The span at 699–708 (RDSRPFRERG) shows a compositional bias: basic and acidic residues.

The protein resides in the nucleus. Functionally, regulator of alternative splicing that specifically recognizes and binds N6-methyladenosine (m6A)-containing RNAs. Acts by acting as a reader of m6A methylation. Required for sex determination and dosage compensation via Sxl alternative splicing: m6A methylation acts as a key regulator of Sxl pre-mRNA and promotes female-specific alternative splicing of Sxl, which determines female physiognomy. M6A methylation is also required for neuronal functions. The sequence is that of YTH domain-containing protein 1 from Drosophila melanogaster (Fruit fly).